A 282-amino-acid chain; its full sequence is Cell cycle checkpoint protein RAD1 (282 aa).

Belongs to the rad1 family. As to quaternary structure, component of the toroidal 9-1-1 (RAD9-RAD1-HUS1) complex, composed of RAD9A, RAD1 and HUS1. The 9-1-1 complex associates with LIG1, POLB, FEN1, RAD17, HDAC1, RPA1 and RPA2. The 9-1-1 complex associates with the RAD17-RFC complex. RAD1 interacts with POLB, FEN1, HUS1, HUS1B, RAD9A and RAD9B. Interacts with DNAJC7. Interacts with RHNO1; interaction is direct. Expressed in testis, uterus, bladder, spleen, ovaries, lung, brain and muscle (at protein level).

It localises to the nucleus. Component of the 9-1-1 cell-cycle checkpoint response complex that plays a major role in DNA repair. The 9-1-1 complex is recruited to DNA lesion upon damage by the RAD17-replication factor C (RFC) clamp loader complex. Acts then as a sliding clamp platform on DNA for several proteins involved in long-patch base excision repair (LP-BER). The 9-1-1 complex stimulates DNA polymerase beta (POLB) activity by increasing its affinity for the 3'-OH end of the primer-template and stabilizes POLB to those sites where LP-BER proceeds; endonuclease FEN1 cleavage activity on substrates with double, nick, or gap flaps of distinct sequences and lengths; and DNA ligase I (LIG1) on long-patch base excision repair substrates. The 9-1-1 complex is necessary for the recruitment of RHNO1 to sites of double-stranded breaks (DSB) occurring during the S phase. The polypeptide is Cell cycle checkpoint protein RAD1 (RAD1) (Homo sapiens (Human)).